We begin with the raw amino-acid sequence, 220 residues long: Adenylate kinase (220 aa).

13 to 18 lines the ATP pocket; that stretch reads GAGKGT. The segment at 33 to 62 is NMP; the sequence is ATGDMLRSQVARQTELGKEAKKIMDQGGLV. Residues threonine 34, arginine 39, 60 to 62, 89 to 92, and glutamine 96 contribute to the AMP site; these read GLV and GFPR. An LID region spans residues 130 to 167; sequence GRLVHPGSGRSYHLEFNPPKVPMKDDVTGEPLIQRSDD. ATP-binding positions include arginine 131 and 140–141; that span reads SY. Positions 164 and 175 each coordinate AMP. Glutamine 203 serves as a coordination point for ATP.

It belongs to the adenylate kinase family. AK2 subfamily. Monomer.

It is found in the cytoplasm. It localises to the cytosol. The protein localises to the mitochondrion intermembrane space. Its subcellular location is the nucleus. The enzyme catalyses AMP + ATP = 2 ADP. Its function is as follows. Catalyzes the reversible transfer of the terminal phosphate group between ATP and AMP. Plays an important role in cellular energy homeostasis and in adenine nucleotide metabolism. Adenylate kinase activity is critical for regulation of the phosphate utilization and the AMP de novo biosynthesis pathways. The polypeptide is Adenylate kinase (adk1) (Schizosaccharomyces pombe (strain 972 / ATCC 24843) (Fission yeast)).